Here is a 1067-residue protein sequence, read N- to C-terminus: MSWLRSSPLRQSGNGGGGGVSTGHSSTGSLRQRPIDAATDCDPRACYDSFCKHWQQAYDIIQHYAPPTHDDVLGVVSHLDYMVTLLLVELHHCNKVSLPSTDASAAPAAPCLEYLLSENLLDKLYEWACTTGRYANAVRLEQLKLYELLVSHSRHQLLCHEPFLRPLLKILASSQGEIFPPDLEKRLVILLNQLCVVLMQNVHLLDLFFFSAQTQVQEQIQNGNVPPPKSGTTTNFIIFSLLIPYVHREGSLGHQARDALLLCMALSQKNSNIGTYIAQYSSICPLLVTGLGGLYSRLPNSIEISSIDWHRITPDDVTEIPELTLFMNALEFCNAVVQVAHEMIKQQLLDFMYQGFIVPVLGPAVLQTLKGKHFQTNIDSQISAMSYLDLILRSITEPGLLRAFVKFLLDTEKFDGERILDSLVERLNSPDANLCMVTMALFDTLLGLHCEDLMLELLLKFMLPGKHVPISHRHKINKIDPYLNSSDFFLELSPDVLKRARDLARPKSVHEQQPPSGATGEQPIQPLAWPSLPSPVMSKTIGANWNYYGLHTGDSLYANLQAYLFEAHWRIAQCQRDCLKWANSYRYQKWPRHGQARVHAHALELARQFFSEFGGGPPAIASESAGEKQLDSLQSIGESSGYESFKWRPADEESDATDLTVTTTTTTASEADLEHNSSSISSGMGGGGGAAAGRRGEAWRISHTNRNELLLTDLDFSEDLFAQGTVSLGPFLNAIWGKLQTFTSNSLYVNLHLTGLITRLAWYPLPLIHSLLLRSDIAITSDTPSFHQVLRILKQQIDAELPVTEDSLEIIDVARSSLIDREFRLVNARKGNENSPLHHHQQPQTTLSQQQQQQQGQQRSAYATLSAATPVQATQTSAYDPFKRSDNKRKSISKSISSMFSRRSTPNPPSSAGAASTLVGNNNSGSGQSQPFSSTGTGTCETSLSTNPQSGAAAARSTGTATTANGNSSNSNISIGGSTQTLSGHSNTTTYSSSTLHGLDGGPQTGSFNSEPASLDSVASMGIIASTSGTERTRDVALCAVLLDEWLKELAAIAQEQSVVLVTDQLL.

A compositionally biased stretch (polar residues) spans 1–11; that stretch reads MSWLRSSPLRQ. 3 disordered regions span residues 1 to 31, 503 to 525, and 832 to 1013; these read MSWL…GSLR, LARP…QPIQ, and NENS…SEPA. 2 positions are modified to phosphoserine: serine 508 and serine 835. Residues 842–858 show a composition bias toward low complexity; sequence QPQTTLSQQQQQQQGQQ. The span at 859-878 shows a compositional bias: polar residues; the sequence is RSAYATLSAATPVQATQTSA. Residues 893–904 show a composition bias toward low complexity; the sequence is SKSISSMFSRRS. Residues 918–949 are compositionally biased toward polar residues; the sequence is LVGNNNSGSGQSQPFSSTGTGTCETSLSTNPQ. The span at 950-979 shows a compositional bias: low complexity; sequence SGAAAARSTGTATTANGNSSNSNISIGGST. Positions 980 to 996 are enriched in polar residues; the sequence is QTLSGHSNTTTYSSSTL.

It belongs to the FHIP family.

The chain is FHIP family protein GL19323 from Drosophila persimilis (Fruit fly).